The chain runs to 1706 residues: Bifunctional hemolysin/adenylate cyclase (1706 aa).

An a, catalytic region spans residues 1–399 (MQQSHQAGYA…RRPSLGAVER (399 aa)). 349-356 (AYGVAGKS) is an ATP binding site. The segment at 383 to 405 (VPASPGLRRPSLGAVERQDSGYD) is disordered. The tract at residues 400-912 (QDSGYDSLDG…LKHSIKLDVI (513 aa)) is b, Ala/Gly-rich. The tract at residues 500-698 (LSAAVFGLGE…SVVGAPVAVV (199 aa)) is required for interaction with CyaC. N6-palmitoyl lysine attachment occurs at residues Lys860 and Lys983. The interval 913–1656 (GGDGDDVVLA…RDADHRVEII (744 aa)) is c. Hemolysin-type calcium-binding repeat units follow at residues 1014–1031 (IGGA…DNFL), 1032–1049 (AGGS…NDTL), 1050–1067 (VGGE…DDVF), 1155–1172 (WGHD…DDIL), 1173–1190 (RGGL…NDIF), 1279–1296 (MGQG…DDLL), 1297–1314 (FGGD…NDTL), 1315–1332 (YGGL…NDWF), 1335–1352 (TQAR…VDTV), 1411–1428 (TGDA…ADVL), 1429–1446 (AGGE…DDQL), 1447–1464 (SGDA…DDWF), 1468–1484 (AANA…RDTV), 1537–1554 (IGDA…NDVL), 1555–1572 (SGGA…SDLL), 1573–1590 (SGDA…DDTY), and 1603–1620 (ESGG…ADQL). Positions 1657–1706 (HAANQAVDQAGIEKLVEAMAQYPDPGAAAAAPPAARVPDTLMQSLAVNWR) are d, Asp/Gly-rich.

The protein in the N-terminal section; belongs to the adenylyl cyclase class-2 family. It in the C-terminal section; belongs to the RTX prokaryotic toxin family. In terms of processing, released in a processed form. Palmitoylated at Lys-860 and Lys-983 by CyaC. The toxin only becomes active when modified in position Lys-983: palmitoylation is required for efficient membrane insertion and pore formation of the acylated Hemolysin chain.

The protein localises to the secreted. It is found in the host cell membrane. The enzyme catalyses ATP = 3',5'-cyclic AMP + diphosphate. Activated by host calmodulin. In terms of biological role, bifunctional adenylate cyclase toxin-hemolysin that plays a crucial role in host colonization. It causes whooping cough by acting on mammalian cells by elevating cAMP-concentration and thus disrupts normal cell function. Adenylate cyclase that is activated by host intracellular calmodulin and catalyzes un-regulated conversion of ATP to cAMP, thereby impairing microbicidal functions of immune effector cells and inducing apoptosis of lung macrophages. Functionally, hemolysin that forms small cation-selective membrane channels, leading to hemolytic activity. The hemolytic activity of CyaA is weak compared with that of the HlyA of E.coli. This chain is Bifunctional hemolysin/adenylate cyclase (cya), found in Bordetella pertussis (strain Tohama I / ATCC BAA-589 / NCTC 13251).